The following is a 515-amino-acid chain: MEELQGYLEEDRSRQQQFLYPLLFQEYIYVFAYDHGLNSSIFYEPQNSLGYDNKFSSVLVKRLIIRMYQKNYLIYSVNDIYQNIFVGHNNYFYFNFFSQILSEGFAVIVEIPFSLQLISSLEEKEIPKSHNLQSSHSIFPFLEDKLLHLNYLSDILIPYPVHMEILVQILQSWIQDVLSLHLLQFLLHEYYNWNSLIIPKKSIYVFSKENKRLFWFLYNLYIYEYEFLLVFPCKQSSFLRLISSGVLLERIHFYVKIEHLGVYRIFCQKTLWIFKDPFIHYIRYQGKSILGSRGTHFLMKKWKYHLVNFWQYYFHFWSQPYRIDIKKLSNYSFYFLGYFSSVQINSSMVRNQMLENSFLMDTLTKKFDTIIPIIPLIRSLFKAQFCTVSGYPISKPIWTDLADCDIINRFGRICRKLTHYHSGSSKKQSLYRMKYILRLSCARTLARKHKSSARSFLQRLSSGLLEEFFTEEEQVIFLIFPKIISFYLYGSYRERIWYLDIIRINDLVNCLLVTT.

Belongs to the intron maturase 2 family. MatK subfamily.

The protein localises to the plastid. The protein resides in the chloroplast. Functionally, usually encoded in the trnK tRNA gene intron. Probably assists in splicing its own and other chloroplast group II introns. The protein is Maturase K of Zingiber officinale (Ginger).